The sequence spans 597 residues: Glutamine--fructose-6-phosphate aminotransferase [isomerizing] (597 aa).

The Nucleophile; for GATase activity role is filled by cysteine 2. In terms of domain architecture, Glutamine amidotransferase type-2 spans 2-218 (CGIVGYIGDS…ENSVGQISLE (217 aa)). 2 consecutive SIS domains span residues 276–416 (IDPE…QLGT) and 449–587 (LSKR…VDHP). Residue lysine 592 is the For Fru-6P isomerization activity of the active site.

As to quaternary structure, homodimer.

The protein localises to the cytoplasm. The enzyme catalyses D-fructose 6-phosphate + L-glutamine = D-glucosamine 6-phosphate + L-glutamate. Catalyzes the first step in hexosamine metabolism, converting fructose-6P into glucosamine-6P using glutamine as a nitrogen source. In Helicobacter pylori (strain J99 / ATCC 700824) (Campylobacter pylori J99), this protein is Glutamine--fructose-6-phosphate aminotransferase [isomerizing].